The sequence spans 623 residues: Xaa-Pro aminopeptidase 1 (623 aa).

Position 77 (Arg-77) interacts with a peptide. Lys-304 is modified (N6-acetyllysine). Residue His-395 coordinates a peptide. 3 residues coordinate Mn(2+): Asp-415, Asp-426, and His-489. A peptide is bound by residues His-489, His-498, and Glu-523. Positions 523 and 537 each coordinate Mn(2+).

It belongs to the peptidase M24B family. In terms of assembly, homodimer. The cofactor is Mn(2+).

The protein localises to the cytoplasm. Its subcellular location is the cytosol. It carries out the reaction Release of any N-terminal amino acid, including proline, that is linked to proline, even from a dipeptide or tripeptide.. In terms of biological role, metalloaminopeptidase that catalyzes the removal of a penultimate prolyl residue from the N-termini of peptides, such as Arg-Pro-Pro. Contributes to the degradation of bradykinin. The polypeptide is Xaa-Pro aminopeptidase 1 (Mus musculus (Mouse)).